The primary structure comprises 186 residues: Shikimate kinase (186 aa).

21-26 (GVGKTT) contributes to the ATP binding site. Thr25 contributes to the Mg(2+) binding site. Substrate contacts are provided by Asp43, Arg67, and Gly90. Arg129 is a binding site for ATP. Position 147 (Arg147) interacts with substrate.

It belongs to the shikimate kinase family. As to quaternary structure, monomer. It depends on Mg(2+) as a cofactor.

The protein resides in the cytoplasm. It carries out the reaction shikimate + ATP = 3-phosphoshikimate + ADP + H(+). Its pathway is metabolic intermediate biosynthesis; chorismate biosynthesis; chorismate from D-erythrose 4-phosphate and phosphoenolpyruvate: step 5/7. Its function is as follows. Catalyzes the specific phosphorylation of the 3-hydroxyl group of shikimic acid using ATP as a cosubstrate. The polypeptide is Shikimate kinase (Bacillus subtilis (strain 168)).